We begin with the raw amino-acid sequence, 772 residues long: DNA ligase (772 aa).

NAD(+) contacts are provided by residues 80-84, 130-131, and Glu160; these read DAEYD and SL. The N6-AMP-lysine intermediate role is filled by Lys162. Arg183, Glu220, Lys336, and Lys360 together coordinate NAD(+). Zn(2+) is bound by residues Cys454, Cys457, Cys473, and Cys479. One can recognise a BRCT domain in the interval 685 to 772; it reads APEQTLEGLT…NGPQGITTIG (88 aa).

The protein belongs to the NAD-dependent DNA ligase family. LigA subfamily. Mg(2+) is required as a cofactor. Requires Mn(2+) as cofactor.

The catalysed reaction is NAD(+) + (deoxyribonucleotide)n-3'-hydroxyl + 5'-phospho-(deoxyribonucleotide)m = (deoxyribonucleotide)n+m + AMP + beta-nicotinamide D-nucleotide.. Functionally, DNA ligase that catalyzes the formation of phosphodiester linkages between 5'-phosphoryl and 3'-hydroxyl groups in double-stranded DNA using NAD as a coenzyme and as the energy source for the reaction. It is essential for DNA replication and repair of damaged DNA. The polypeptide is DNA ligase (Cutibacterium acnes (strain DSM 16379 / KPA171202) (Propionibacterium acnes)).